We begin with the raw amino-acid sequence, 234 residues long: Toxic shock syndrome toxin-1 (234 aa).

An N-terminal signal peptide occupies residues 1 to 40 (MNKKLLMNFFIVSPLLLATTATDFTPVPLSSNQIIKTAKA).

It belongs to the staphylococcal/streptococcal toxin family.

It is found in the secreted. Its function is as follows. Responsible for the symptoms of toxic shock syndrome. This Staphylococcus aureus protein is Toxic shock syndrome toxin-1 (tst).